The primary structure comprises 354 residues: Protein RecA (354 aa).

67-74 is an ATP binding site; the sequence is GPESSGKT.

This sequence belongs to the RecA family.

The protein localises to the cytoplasm. Can catalyze the hydrolysis of ATP in the presence of single-stranded DNA, the ATP-dependent uptake of single-stranded DNA by duplex DNA, and the ATP-dependent hybridization of homologous single-stranded DNAs. It interacts with LexA causing its activation and leading to its autocatalytic cleavage. The protein is Protein RecA of Serratia marcescens.